We begin with the raw amino-acid sequence, 394 residues long: Ribulose bisphosphate carboxylase large chain (394 aa).

Position 5 is an N6,N6,N6-trimethyllysine (Lys5). Residues Asn114 and Thr164 each contribute to the substrate site. Lys166 serves as the catalytic Proton acceptor. Lys168 contributes to the substrate binding site. Mg(2+) is bound by residues Lys192, Asp194, and Glu195. Lys192 carries the N6-carboxylysine modification. His285 acts as the Proton acceptor in catalysis. 3 residues coordinate substrate: Arg286, His318, and Ser370.

This sequence belongs to the RuBisCO large chain family. Type I subfamily. Heterohexadecamer of 8 large chains and 8 small chains. Mg(2+) is required as a cofactor.

It is found in the plastid. The protein resides in the chloroplast. The catalysed reaction is 2 (2R)-3-phosphoglycerate + 2 H(+) = D-ribulose 1,5-bisphosphate + CO2 + H2O. It catalyses the reaction D-ribulose 1,5-bisphosphate + O2 = 2-phosphoglycolate + (2R)-3-phosphoglycerate + 2 H(+). RuBisCO catalyzes two reactions: the carboxylation of D-ribulose 1,5-bisphosphate, the primary event in carbon dioxide fixation, as well as the oxidative fragmentation of the pentose substrate in the photorespiration process. Both reactions occur simultaneously and in competition at the same active site. This Barclaya longifolia (Orchid lily) protein is Ribulose bisphosphate carboxylase large chain (rbcL).